Here is an 817-residue protein sequence, read N- to C-terminus: Tax1-binding protein 1 homolog (817 aa).

Phosphoserine is present on residues Ser-124 and Ser-138. A coiled-coil region spans residues 144 to 628 (TTKAGLLELK…ENQAERKLEG (485 aa)). Residues 320–420 (EEISRLQFSL…ELKLSAVNKD (101 aa)) form an oligomerization region. The span at 609-627 (SREKEHKRSVENQAERKLE) shows a compositional bias: basic and acidic residues. Residues 609-685 (SREKEHKRSV…ADGAFYPDEI (77 aa)) form a disordered region. The residue at position 617 (Ser-617) is a Phosphoserine; by IKKA. Over residues 628–643 (GQNSQSPHQISQCLKT) the composition is skewed to polar residues. Ser-633 is modified (phosphoserine). Phosphoserine; by IKKA is present on Ser-694. Residues 704–742 (SQPARNLSRPDGLEDPEDSKEDEKVPTAPDPPSQHLRGH) form a disordered region. 2 UBZ1-type zinc fingers span residues 755 to 781 (QKKC…VESH) and 782 to 808 (WKVC…VQTH). Residues Cys-758, Cys-761, His-777, His-781, Cys-785, Cys-788, His-804, and His-808 each contribute to the Zn(2+) site.

As to quaternary structure, homooligomer. Interacts with TNFAIP3. Interacts with STARD13. Interacts with MYO6. Interacts with TOM1; the interaction is indirect and is mediated by MYO6, which acts as a bridge between TOM1 and TAX1BP1. Interacts with MAVS; this interaction induces MAVS polyubiquitination. Interacts with TNIP1. Interacts with TRAF6; this interaction mediates deubiquitination of TRAF6 and inhibition of NF-kappa-B activation. Interacts with RIPK1; this interaction negatively regulates RIPK1 ubiquitination. Interacts with NBR1. Interacts with TBK1. Interacts with RB1CC1. Interacts with SQSTM1. Interacts with AZI2. Post-translationally, phosphorylated in the C-terminal region by CHUK/IKKA leading to NF-kappa-B signaling down-regulation.

Its subcellular location is the cytoplasm. It is found in the mitochondrion. The protein localises to the preautophagosomal structure. It localises to the cytoplasmic vesicle. The protein resides in the autophagosome. Functionally, ubiquitin-binding adapter that participates in inflammatory, antiviral and innate immune processes as well as selective autophagy regulation. Plays a key role in the negative regulation of NF-kappa-B and IRF3 signalings by acting as an adapter for the ubiquitin-editing enzyme A20/TNFAIP3 to bind and inactivate its substrates. Disrupts the interactions between the E3 ubiquitin ligase TRAF3 and TBK1/IKBKE to attenuate 'Lys63'-linked polyubiquitination of TBK1 and thereby IFN-beta production. Also recruits A20/TNFAIP3 to ubiquitinated signaling proteins TRAF6 and RIPK1, leading to their deubiquitination and disruption of IL-1 and TNF-induced NF-kappa-B signaling pathways. Inhibits virus-induced apoptosis by inducing the 'Lys-48'-linked polyubiquitination and degradation of MAVS via recruitment of the E3 ligase ITCH, thereby attenuating MAVS-mediated apoptosis signaling. As a macroautophagy/autophagy receptor, facilitates the xenophagic clearance of pathogenic bacteria such as Salmonella typhimurium and Mycobacterium tuberculosis. Upon NBR1 recruitment to the SQSTM1-ubiquitin condensates, acts as the major recruiter of RB1CC1 to these ubiquitin condensates to promote their autophagic degradation. This chain is Tax1-binding protein 1 homolog (TAX1BP1), found in Bos taurus (Bovine).